Here is a 544-residue protein sequence, read N- to C-terminus: Probable protein kinase UbiB (544 aa).

In terms of domain architecture, Protein kinase spans 123–501 (EFDIKPLASA…KRQQATGKFL (379 aa)). Residues 129 to 137 (LASASIAQV) and Lys152 contribute to the ATP site. Asp287 serves as the catalytic Proton acceptor. A run of 2 helical transmembrane segments spans residues 496–516 (ATGK…AILV) and 519–539 (AYEQ…LLSW).

The protein belongs to the ABC1 family. UbiB subfamily.

It localises to the cell inner membrane. It participates in cofactor biosynthesis; ubiquinone biosynthesis [regulation]. Is probably a protein kinase regulator of UbiI activity which is involved in aerobic coenzyme Q (ubiquinone) biosynthesis. The chain is Probable protein kinase UbiB from Vibrio parahaemolyticus serotype O3:K6 (strain RIMD 2210633).